A 370-amino-acid chain; its full sequence is Cytochrome b (370 aa).

4 helical membrane passes run 30-50, 74-96, 109-129, and 175-195; these read FGSM…FLAF, WIFR…LHIF, VWMS…MGYV, and FFVL…GHLI. Residues histidine 80 and histidine 94 each contribute to the heme b site. Residues histidine 179 and histidine 193 each contribute to the heme b site. Residue histidine 198 coordinates a ubiquinone. Transmembrane regions (helical) follow at residues 221-240, 284-304, 316-336, and 342-362; these read YIGK…VLSL, VLGV…ALVN, FLVF…QCMV, and VLSP…LGIF.

This sequence belongs to the cytochrome b family. As to quaternary structure, the main subunits of complex b-c1 are: cytochrome b, cytochrome c1 and the Rieske protein. Requires heme b as cofactor.

It localises to the mitochondrion inner membrane. In terms of biological role, component of the ubiquinol-cytochrome c reductase complex (complex III or cytochrome b-c1 complex) that is part of the mitochondrial respiratory chain. The b-c1 complex mediates electron transfer from ubiquinol to cytochrome c. Contributes to the generation of a proton gradient across the mitochondrial membrane that is then used for ATP synthesis. This Caenorhabditis briggsae protein is Cytochrome b (ctb-1).